The primary structure comprises 48 residues: Large ribosomal subunit protein bL33B (48 aa).

Belongs to the bacterial ribosomal protein bL33 family.

This Mycoplasma genitalium (strain ATCC 33530 / DSM 19775 / NCTC 10195 / G37) (Mycoplasmoides genitalium) protein is Large ribosomal subunit protein bL33B (rpmG2).